The chain runs to 65 residues: Putative antitoxin PF2058 (65 aa).

This sequence belongs to the UPF0165 family.

Possibly the antitoxin component of a type II toxin-antitoxin (TA) system. This chain is Putative antitoxin PF2058, found in Pyrococcus furiosus (strain ATCC 43587 / DSM 3638 / JCM 8422 / Vc1).